Here is a 191-residue protein sequence, read N- to C-terminus: Peptidyl-tRNA hydrolase (191 aa).

Tyrosine 17 contributes to the tRNA binding site. Histidine 22 acts as the Proton acceptor in catalysis. The tRNA site is built by tyrosine 68, asparagine 70, and asparagine 116.

This sequence belongs to the PTH family. In terms of assembly, monomer.

It is found in the cytoplasm. The catalysed reaction is an N-acyl-L-alpha-aminoacyl-tRNA + H2O = an N-acyl-L-amino acid + a tRNA + H(+). Its function is as follows. Hydrolyzes ribosome-free peptidyl-tRNAs (with 1 or more amino acids incorporated), which drop off the ribosome during protein synthesis, or as a result of ribosome stalling. In terms of biological role, catalyzes the release of premature peptidyl moieties from peptidyl-tRNA molecules trapped in stalled 50S ribosomal subunits, and thus maintains levels of free tRNAs and 50S ribosomes. In Francisella tularensis subsp. mediasiatica (strain FSC147), this protein is Peptidyl-tRNA hydrolase.